We begin with the raw amino-acid sequence, 518 residues long: 3-phosphoshikimate 1-carboxyvinyltransferase 1, chloroplastic (518 aa).

Residues 1–74 (MAQISSMGQG…RISASVVTAQ (74 aa)) constitute a chloroplast transit peptide. 3 residues coordinate 3-phosphoshikimate: lysine 97, serine 98, and arginine 102. Lysine 97 contributes to the phosphoenolpyruvate binding site. Phosphoenolpyruvate contacts are provided by glycine 175 and arginine 205. 3-phosphoshikimate is bound by residues serine 252, serine 253, glutamine 254, serine 280, aspartate 405, and lysine 432. Glutamine 254 is a phosphoenolpyruvate binding site. Aspartate 405 acts as the Proton acceptor in catalysis. Phosphoenolpyruvate contacts are provided by arginine 436, arginine 478, and lysine 503.

The protein belongs to the EPSP synthase family.

It is found in the plastid. Its subcellular location is the chloroplast. The catalysed reaction is 3-phosphoshikimate + phosphoenolpyruvate = 5-O-(1-carboxyvinyl)-3-phosphoshikimate + phosphate. Its pathway is metabolic intermediate biosynthesis; chorismate biosynthesis; chorismate from D-erythrose 4-phosphate and phosphoenolpyruvate: step 6/7. In terms of biological role, catalyzes the transfer of the enolpyruvyl moiety of phosphoenolpyruvate (PEP) to the 5-hydroxyl of shikimate-3-phosphate (S3P) to produce enolpyruvyl shikimate-3-phosphate and inorganic phosphate. The chain is 3-phosphoshikimate 1-carboxyvinyltransferase 1, chloroplastic (EPSPS-1) from Nicotiana tabacum (Common tobacco).